The sequence spans 195 residues: 3-isopropylmalate dehydratase small subunit (195 aa).

This sequence belongs to the LeuD family. LeuD type 1 subfamily. Heterodimer of LeuC and LeuD.

The enzyme catalyses (2R,3S)-3-isopropylmalate = (2S)-2-isopropylmalate. The protein operates within amino-acid biosynthesis; L-leucine biosynthesis; L-leucine from 3-methyl-2-oxobutanoate: step 2/4. Functionally, catalyzes the isomerization between 2-isopropylmalate and 3-isopropylmalate, via the formation of 2-isopropylmaleate. This Salinispora arenicola (strain CNS-205) protein is 3-isopropylmalate dehydratase small subunit.